Here is a 279-residue protein sequence, read N- to C-terminus: Urease accessory protein UreD (279 aa).

Belongs to the UreD family. UreD, UreF and UreG form a complex that acts as a GTP-hydrolysis-dependent molecular chaperone, activating the urease apoprotein by helping to assemble the nickel containing metallocenter of UreC. The UreE protein probably delivers the nickel.

The protein resides in the cytoplasm. Functionally, required for maturation of urease via the functional incorporation of the urease nickel metallocenter. This chain is Urease accessory protein UreD, found in Rhodopseudomonas palustris (strain HaA2).